The following is a 414-amino-acid chain: MDFEVDYEGGNNTVNLQFDLKAQTSNFLNLQELQNSFNGNDLNTQLFWKPLINKLVDKNQNDLTSIAKTAVSDSLFLSNTNIFNSVLKIDEQLDLAKTKFEKEIIEPFKKEREKAKADYEEQQRILAEERRKQEEELKRKEEEAKRLKEQQEQFNKSFENAKEFKDYWKNQKKDVTDKTQLIDALKTSFAADKNKTFSLLINSFTKATSDYYKNNKKDESENAKKAFSEKGIQFPRQGLEGLYMSDWLRGKLTSYTDIKLNLTSIKIENKENNPTIDWKNNGIEFRQHYPYKFKFEIDIKYQGGYKLTGLFSWFAPFSGIPSSWNGEMDVKFIVDGDLDYNLVQNTDYPGSLFQFKDNQLLFTLHVKEQIKVQDGKFMDLLKQQNLHNLDLRNGATKPPVVDLASYLHYLVLNS.

Belongs to the MG032/MG096/MG288 family.

This is an uncharacterized protein from Mycoplasma genitalium (strain ATCC 33530 / DSM 19775 / NCTC 10195 / G37) (Mycoplasmoides genitalium).